A 394-amino-acid polypeptide reads, in one-letter code: Elongation factor Tu (394 aa).

The tr-type G domain occupies 10–205; it reads KPHVNIGTIG…VDTWIPLPPR (196 aa). A G1 region spans residues 19 to 26; the sequence is GHVDHGKT. 19–26 provides a ligand contact to GTP; that stretch reads GHVDHGKT. Threonine 26 provides a ligand contact to Mg(2+). Residues 60–64 are G2; that stretch reads GITIN. The interval 81–84 is G3; it reads DCPG. GTP-binding positions include 81–85 and 136–139; these read DCPGH and NKCD. The segment at 136-139 is G4; the sequence is NKCD. Residues 174 to 176 form a G5 region; it reads SAL.

The protein belongs to the TRAFAC class translation factor GTPase superfamily. Classic translation factor GTPase family. EF-Tu/EF-1A subfamily. As to quaternary structure, monomer.

Its subcellular location is the cytoplasm. The enzyme catalyses GTP + H2O = GDP + phosphate + H(+). GTP hydrolase that promotes the GTP-dependent binding of aminoacyl-tRNA to the A-site of ribosomes during protein biosynthesis. The chain is Elongation factor Tu from Phocaeicola vulgatus (strain ATCC 8482 / DSM 1447 / JCM 5826 / CCUG 4940 / NBRC 14291 / NCTC 11154) (Bacteroides vulgatus).